The chain runs to 818 residues: Catenin beta (818 aa).

Composition is skewed to polar residues over residues 1 to 21 (METYQQMNSGSGPRSVGTPQG) and 48 to 66 (GDSGIQSGATTQAPPSVSS). 2 disordered regions span residues 1–24 (METYQQMNSGSGPRSVGTPQGQYM) and 48–71 (GDSGIQSGATTQAPPSVSSKHGLD). 7 ARM repeats span residues 164-203 (NYQDDADLATRAIPELTKLLNDEDQVVVSQAAMMVHQLSK), 248-287 (RQGLLTIFKSGGIPALVKLLSSPVESVLFYAITTLHNLLL), 412-451 (DAATKSSDIEGLLQMLVQLLASNDINIVTCAAGILSNLTC), 454-495 (QRNK…HLTS), 501-541 (EMAQ…NLAL), 543-582 (PANHAPLREHGAIPRIVQLLIRAHQDTQRRATAGSGNTSA), and 648-687 (KEGAEMIEQEGTTAPLTELLHSRNEGVATYAAAVLFRMSE). Residues 732–818 (QGFRGYQGSG…QMAAWFDTDL (87 aa)) are disordered.

The protein belongs to the beta-catenin family.

It localises to the cytoplasm. The protein resides in the cytoskeleton. In terms of biological role, binds to the cytoplasmic domain of the cell-cell adhesion molecule E-cadherin, and perhaps to other (membrane) proteins. The association of catenins to cadherins produces a complex which is linked to the actin filament network, and which seems to be of primary importance for cadherins cell-adhesion properties. In Urechis caupo (Innkeeper worm), this protein is Catenin beta.